A 392-amino-acid polypeptide reads, in one-letter code: Glyceraldehyde-3-phosphate dehydrogenase A, chloroplastic (392 aa).

A chloroplast-targeting transit peptide spans 1-56 (NSSLQVSNKGFSEFSGLRTSSAIPFGRKTNDDLLSVVAFQTSVIGGGNSKRGVVEA). Residues 67 to 68 (RI), Asp91, and Arg136 contribute to the NADP(+) site. Residues 208-210 (SCT), Thr239, Arg254, 267-268 (TG), and Arg290 contribute to the D-glyceraldehyde 3-phosphate site. Catalysis depends on Cys209, which acts as the Nucleophile. An NADP(+)-binding site is contributed by Asn372.

This sequence belongs to the glyceraldehyde-3-phosphate dehydrogenase family. As to quaternary structure, tetramer of either four A chains (GAPDH 2) or two A and two B chains (GAPDH 1).

The protein resides in the plastid. Its subcellular location is the chloroplast. It catalyses the reaction D-glyceraldehyde 3-phosphate + phosphate + NADP(+) = (2R)-3-phospho-glyceroyl phosphate + NADPH + H(+). Its pathway is carbohydrate biosynthesis; Calvin cycle. This chain is Glyceraldehyde-3-phosphate dehydrogenase A, chloroplastic (GAPA), found in Nicotiana tabacum (Common tobacco).